Consider the following 197-residue polypeptide: Adenylate kinase 1 (197 aa).

19–24 (GSGKGT) provides a ligand contact to ATP. The NMP stretch occupies residues 39 to 68 (SSGDLLRAEVQSGSPKGKELKAMMERGELV). AMP is bound by residues Ser-40, Arg-45, 95-98 (GYPR), and Gln-102. Residues 132–142 (KRAETSNRVDD) are LID. Arg-133 contributes to the ATP binding site. The AMP site is built by Arg-139 and Arg-150. Gly-178 provides a ligand contact to ATP.

This sequence belongs to the adenylate kinase family. AK1 subfamily. As to quaternary structure, monomer. The cofactor is Mg(2+).

The protein resides in the cytoplasm. It carries out the reaction AMP + ATP = 2 ADP. Its pathway is purine metabolism; purine nucleotide biosynthesis. Catalyzes the reversible transfer of the terminal phosphate group between ATP and AMP. Plays an important role in cellular energy homeostasis and in adenine nucleotide metabolism. The chain is Adenylate kinase 1 from Schistosoma mansoni (Blood fluke).